The primary structure comprises 540 residues: MAAKDVKFSTDARDRMLRGVDILANAVKVTLGPKGRNVVIEKSFGAPRITKDGVTVAKEIELEDKFENMGAQMVREVASKTADLAGDGTTTATVLAQAIVKEGAKSVAAGMNPMDLKRGIDLAVDAIVADLKAHAKKITSNDEIAQVGTISANGDNEIGRFLAEAMQKVGNEGVITVEEAKSLDTELEVVEGMQFDRGYVSPYFVTNSEKMRVELEDPYILIHEKKLSGLQTMLPLLEAVVQSGKPLLIVAEDVEGEALATLVVNKLRGGLKIAAVKAPGFGDRRKAMLEDIAILTGGTTISEDLGIKLENVTLSMLGRAKKVVIDKENTTIVDGAGAKKDIEARTQQIKLQIEETTSDYDREKLQERLAKLAGGVAVIRVGGATEVEVKERKDRVDDALHATRAAVEEGILPGGGVALLRATKVLDGVKTANADQKAGVDIIRRAIQVPVRQIVQNAGEDGSLVVGKLLEKDTYSWGFNAATGEYQDLVQAGVIDPAKVVRTALQDAASVASLLITTEALVADKPKKAEATQAAPAMDF.

Residues Thr-30–Pro-33, Lys-51, Asp-87–Thr-91, Gly-415, Asn-480–Ala-482, and Asp-496 contribute to the ATP site.

It belongs to the chaperonin (HSP60) family. As to quaternary structure, forms a cylinder of 14 subunits composed of two heptameric rings stacked back-to-back. Interacts with the co-chaperonin GroES.

It is found in the cytoplasm. It catalyses the reaction ATP + H2O + a folded polypeptide = ADP + phosphate + an unfolded polypeptide.. Together with its co-chaperonin GroES, plays an essential role in assisting protein folding. The GroEL-GroES system forms a nano-cage that allows encapsulation of the non-native substrate proteins and provides a physical environment optimized to promote and accelerate protein folding. This is Chaperonin GroEL 3 from Bradyrhizobium sp. (strain BTAi1 / ATCC BAA-1182).